A 140-amino-acid chain; its full sequence is Profilin (140 aa).

Residue S2 is modified to N-acetylserine.

It belongs to the profilin family. In terms of assembly, occurs in many kinds of cells as a complex with monomeric actin in a 1:1 ratio.

The protein localises to the cytoplasm. It is found in the cytoskeleton. Binds to actin and affects the structure of the cytoskeleton. At high concentrations, profilin prevents the polymerization of actin, whereas it enhances it at low concentrations. By binding to PIP2, it inhibits the formation of IP3 and DG. This chain is Profilin, found in Heliocidaris crassispina (Sea urchin).